The sequence spans 340 residues: Solute carrier family 35 member G3 (340 aa).

Residues 11-31 form a disordered region; that stretch reads PDFTQPSPPSTPSSLTSNHHN. Helical transmembrane passes span 39–59, 69–89, 107–127, 160–180, 189–209, 223–243, 257–277, 283–303, and 307–327; these read TKGL…VGPF, LPSL…ALIL, FLHA…VQVV, AWCG…PGLG, LYTA…SLGL, TVAF…LFVL, CMVA…YAVT, LVCA…YYVL, and VAPS…IITA. Positions 51-176 constitute an EamA 1 domain; that stretch reads LSAGFVGPFS…STLGLIIIVG (126 aa). An EamA 2 domain is found at 223–327; the sequence is TVAFLFGLVG…VLGSIAIITA (105 aa).

Belongs to the SLC35G solute transporter family.

Its subcellular location is the membrane. This is Solute carrier family 35 member G3 (Slc35g3) from Rattus norvegicus (Rat).